A 498-amino-acid polypeptide reads, in one-letter code: Cytochrome P450 monooxygenase 110 (498 aa).

A helical membrane pass occupies residues 7–24; sequence YVFALLGILATLYFVRWS. N-linked (GlcNAc...) asparagine glycosylation is present at Asn425. A heme-binding site is contributed by Cys440.

The protein belongs to the cytochrome P450 family. Requires heme as cofactor.

The protein localises to the membrane. Its pathway is secondary metabolite biosynthesis. In terms of biological role, cytochrome P450 monooxygenase that is able to use dehydroabietic acid and testosterone as substrates for oxidation, suggesting that the natural substrate(s) may be structurally related to steroid compounds. This chain is Cytochrome P450 monooxygenase 110, found in Postia placenta (strain ATCC 44394 / Madison 698-R) (Brown rot fungus).